Here is a 262-residue protein sequence, read N- to C-terminus: Eukaryotic translation initiation factor 3 subunit G (262 aa).

The region spanning 182 to 260 is the RRM domain; sequence NTCRVTNLPQ…MVLKVEWTRP (79 aa).

Belongs to the eIF-3 subunit G family. In terms of assembly, component of the eukaryotic translation initiation factor 3 (eIF-3) complex.

Its subcellular location is the cytoplasm. In terms of biological role, RNA-binding component of the eukaryotic translation initiation factor 3 (eIF-3) complex, which is involved in protein synthesis of a specialized repertoire of mRNAs and, together with other initiation factors, stimulates binding of mRNA and methionyl-tRNAi to the 40S ribosome. The eIF-3 complex specifically targets and initiates translation of a subset of mRNAs involved in cell proliferation. This subunit can bind 18S rRNA. Binds to GC-rich 5'UTRs in cholinergic motor neurons, thereby may play a role in translational regulation of mRNAs involved in neuropeptide signaling and stress response, including hlh-30 isoform d and ncs-2. The protein is Eukaryotic translation initiation factor 3 subunit G of Caenorhabditis elegans.